Consider the following 329-residue polypeptide: GTP 3',8-cyclase (329 aa).

The Radical SAM core domain maps to 8 to 234 (AFARKFFYLR…QIRQRSDGPA (227 aa)). R17 contacts GTP. [4Fe-4S] cluster-binding residues include C24 and C28. Y30 provides a ligand contact to S-adenosyl-L-methionine. C31 is a [4Fe-4S] cluster binding site. R68 is a GTP binding site. S-adenosyl-L-methionine is bound at residue G72. T99 contributes to the GTP binding site. S123 is an S-adenosyl-L-methionine binding site. K160 is a GTP binding site. Position 194 (M194) interacts with S-adenosyl-L-methionine. Residues C257 and C260 each contribute to the [4Fe-4S] cluster site. 262–264 (RLR) contacts GTP. [4Fe-4S] cluster is bound at residue C274.

The protein belongs to the radical SAM superfamily. MoaA family. As to quaternary structure, monomer and homodimer. Requires [4Fe-4S] cluster as cofactor.

It carries out the reaction GTP + AH2 + S-adenosyl-L-methionine = (8S)-3',8-cyclo-7,8-dihydroguanosine 5'-triphosphate + 5'-deoxyadenosine + L-methionine + A + H(+). It functions in the pathway cofactor biosynthesis; molybdopterin biosynthesis. Its function is as follows. Catalyzes the cyclization of GTP to (8S)-3',8-cyclo-7,8-dihydroguanosine 5'-triphosphate. This is GTP 3',8-cyclase from Klebsiella pneumoniae (strain 342).